We begin with the raw amino-acid sequence, 267 residues long: CD82 antigen (267 aa).

Topologically, residues 1–11 (MGSACIKVTKY) are cytoplasmic. A lipid anchor (S-palmitoyl cysteine) is attached at Cys-5. The helical transmembrane segment at 12–32 (FLFLFNLIFFILGAVILGFGV) threads the bilayer. Residues 33 to 53 (WILADKSSFISVLQTSSSSLR) lie on the Extracellular side of the membrane. Residues 54 to 72 (MGAYVFIGVGAVTMLMGFL) traverse the membrane as a helical segment. Over 73-83 (GCIGAVNEVRC) the chain is Cytoplasmic. A lipid anchor (S-palmitoyl cysteine) is attached at Cys-74. The chain crosses the membrane as a helical span at residues 84–110 (LLGLYFAFLLLILIAQVTAGALFYFNM). Over 111–228 (GKLKQEMGGI…KVQAWLQENL (118 aa)) the chain is Extracellular. Asn-129, Asn-157, and Asn-198 each carry an N-linked (GlcNAc...) asparagine glycan. A helical membrane pass occupies residues 229-250 (GIILGVGVGVAIIELLGMVLSI). Over 251-267 (CLCRHVHSEDYSKVPKY) the chain is Cytoplasmic.

The protein belongs to the tetraspanin (TM4SF) family. In terms of assembly, forms homooligomers. Interacts directly with IGSF8. Interacts with EGFR. Interacts with VEGFA and PDGFB. Interacts with ITGA4. Interacts with ITGA6; this interaction reduces ITGA6 cell surface expression. Interacts with ITGB1. Interacts with TLR4; this interaction inhibits TLR4-mediated signaling pathway. Interacts with TLR9. Interacts with PLAUR. Palmitoylated. Palmitoylation contributes to oligomerization and surface expression. Lymphoid specific.

The protein resides in the cell membrane. It localises to the cytoplasmic vesicle. It is found in the phagosome. In terms of biological role, structural component of specialized membrane microdomains known as tetraspanin-enriched microdomains (TERMs), which act as platforms for receptor clustering and signaling. Participates thereby in diverse biological functions such as cell signal transduction, adhesion, migration and protein trafficking. Acts as a attenuator of EGF signaling, facilitating ligand-induced endocytosis of the receptor and its subsequent desensitization. Mechanistically, modulates ligand-induced ubiquitination and trafficking of EGFR via E3 ligase CBL phosphorylation by PKC. Increases cell-matrix adhesion by regulating the membrane organization of integrin alpha4/ITA4. Modulates adhesion and suppresses cell migration through other integrins such as the alpha6/ITGA6 and beta1/ITGB1. Decreases cell-associated plasminogen activation by interfering with the interaction between urokinase-type plasminogen activator/PLAU and its receptor PLAUR. Associates with CD4 or CD8 and delivers costimulatory signals for the TCR/CD3 pathway. Plays a role in TLR9 trafficking to acidified CpG-containing compartments by controlling interaction between TLR9 and VAMP3 and subsequent myddosome assembly. Inhibits LPS-induced inflammatory response by preventing binding of LPS to TLR4 on the cell surface. Plays a role in the activation of macrophages into anti-inflammatory phenotypes. Independently of Toll-like receptor (TLR) signaling, is recruited to pathogen-containing phagosomes prior to fusion with lysosomes and thereby participates in antigen presentation. Also acts to control angiogenesis and switch angiogenic milieu to quiescent state by binding and sequestering VEGFA and PDGFB to inhibit the signaling they trigger via their respective cell surface receptor. This Homo sapiens (Human) protein is CD82 antigen (CD82).